Here is a 464-residue protein sequence, read N- to C-terminus: MAVYNYDVVILGTGPAGEGAAMNASKYGRKLAVVDSRRVVGGNCTHLGTIPSKALRHSVKQIIEFNTNPMFRQIGEPRWFSFPDVLKSADRVISKQVASRTGYYARNRIDMFTGTASFVDERTVEVVTPSGAVERLVADQFVIATGSRPYRPSDINFNHPRVYDSDTILSLSHTPRRLIIYGAGVIGCEYASIFSGLGVLVDLIDTRDQLLSFLDDEISDALSYHLRNNNVLIRHNEEYERVEGLDNGVILHLKSGKKIKADALLWCNGRTGNTDKLGLENVGIKVNSRGQVEVDENYRTSVSNIFAAGDVIGWPSLASAAYDQGRSAAGNIVESDSWRFVNDVPTGIYTIPEISSIGKNESELTAAKIPYEVGKAFFKGMARAQISNEPVGMLKILFHRETLEILGVHCFGDQASEIVHIGQAIMNQPGELNTLKYFVNTTFNYPTMAEAYRVAAFDGLNRLF.

35–44 serves as a coordination point for FAD; sequence DSRRVVGGNC.

Belongs to the class-I pyridine nucleotide-disulfide oxidoreductase family. FAD is required as a cofactor.

It localises to the cytoplasm. It catalyses the reaction NAD(+) + NADPH = NADH + NADP(+). In terms of biological role, conversion of NADPH, generated by peripheral catabolic pathways, to NADH, which can enter the respiratory chain for energy generation. The chain is Soluble pyridine nucleotide transhydrogenase from Pseudomonas paraeruginosa (strain DSM 24068 / PA7) (Pseudomonas aeruginosa (strain PA7)).